A 315-amino-acid polypeptide reads, in one-letter code: Beta-ketoacyl-[acyl-carrier-protein] synthase III 2 (315 aa).

Active-site residues include Cys-113 and His-241. The ACP-binding stretch occupies residues 242–246; it reads QANLR. Asn-271 is an active-site residue.

This sequence belongs to the thiolase-like superfamily. FabH family. As to quaternary structure, homodimer.

It is found in the cytoplasm. The catalysed reaction is malonyl-[ACP] + acetyl-CoA + H(+) = 3-oxobutanoyl-[ACP] + CO2 + CoA. The protein operates within lipid metabolism; fatty acid biosynthesis. Catalyzes the condensation reaction of fatty acid synthesis by the addition to an acyl acceptor of two carbons from malonyl-ACP. Catalyzes the first condensation reaction which initiates fatty acid synthesis and may therefore play a role in governing the total rate of fatty acid production. Possesses both acetoacetyl-ACP synthase and acetyl transacylase activities. Its substrate specificity determines the biosynthesis of branched-chain and/or straight-chain of fatty acids. This Streptomyces avermitilis (strain ATCC 31267 / DSM 46492 / JCM 5070 / NBRC 14893 / NCIMB 12804 / NRRL 8165 / MA-4680) protein is Beta-ketoacyl-[acyl-carrier-protein] synthase III 2.